The primary structure comprises 195 residues: Ribonuclease HII (195 aa).

The RNase H type-2 domain maps to 1-195 (MICGIDEAGR…SWRTLRYLNT (195 aa)). Residues Asp-6, Glu-7, and Asp-101 each contribute to the a divalent metal cation site.

The protein belongs to the RNase HII family. Mn(2+) is required as a cofactor. Mg(2+) serves as cofactor.

It localises to the cytoplasm. It carries out the reaction Endonucleolytic cleavage to 5'-phosphomonoester.. Endonuclease that specifically degrades the RNA of RNA-DNA hybrids. The chain is Ribonuclease HII from Pyrobaculum islandicum (strain DSM 4184 / JCM 9189 / GEO3).